The chain runs to 73 residues: Large ribosomal subunit protein bL31 (73 aa).

Zn(2+) is bound by residues Cys16, Cys18, Cys37, and Cys40.

This sequence belongs to the bacterial ribosomal protein bL31 family. Type A subfamily. Part of the 50S ribosomal subunit. Requires Zn(2+) as cofactor.

Functionally, binds the 23S rRNA. This Blochmanniella floridana protein is Large ribosomal subunit protein bL31.